A 973-amino-acid polypeptide reads, in one-letter code: MSSHHQILQIRSDPFVLSHCCRHTRLTSSLTLQSPLKQPFSCLPFRWRRSYRGGVRSSTTETHGSKKEALVSETATTSIELKRVYPFHEIEPKWQRYWEDNRIFRTPDDVDTSKPKFYVLDMFPYPSGAGLHVGHPLGYTATDILARLRRMQGYNVLHPMGWDAFGLPAEQYAIETGTHPKTTTLKNIDRFRLQLKSLGFSYDWDRELSTTEPDYYKWTQWIFLQLYKKGLAYQAEVPVNWCPALGTVLANEEVVDGVSERGGHPVIRKPMRQWMLKITAYADRLLEDLDELEWPESIKEMQRNWIGRSEGAELNFSILDGEGRETDKEITVYTTRPDTLFGATYMVVAPEHQLLSYFVTAEQKQQVEEYKDFASRKSDLERTELQKDKTGVFTGCYAKNPANGDAIPIWVADYVLASYGTGAIMAVPAHDTRDNEFALKYNIPIKWVVRNEANSSDDAKQVYPGLGIIENSSTLETGLDINQLSSKEAALKVIEWAERTGNGKKKVNYKLRDWLFARQRYWGEPIPILILDESGETIAISESELPLTLPELNDFTPTGTGEPPLSKAVSWVNTVDPSTGKPAKRETSTMPQWAGSCWYYLRFMDPKNPEALVDKEKEKYWSPVDVYVGGAEHAVLHLLYSRFWHKVLYDIGVVSTKEPFKCVINQGIILGEVQYTAWKDQEGNYVSADTEERLNEHQQVTIPEEKVIKSGDHFVLKEDPSIRLIPRVYKMSKSRGNVVNPDDVVLEYGADSLRLYEMFMGPFRDSKTWNTSGIEGVHRFLARTWRLVIGLPQSDGSFKDGTLVTDDEPTLEQLRTLHKCIAKVTEEIESTRFNTGISGMMEFVNAAYKWNNQPRGIIEPFVLLLSPYAPHMAEELWSRLGHPNSLAYESFPKANPDYLKNTTIVLPVQINGKTRGTIEVEEGCSEDDAFVLASQDDKLRKYLDGQSIKKRIYVPGKILNVILDRTNVKVTTK.

A 'HIGH' region motif is present at residues 126–135 (PSGAGLHVGH). A 'KMSKS' region motif is present at residues 730-734 (KMSKS). Lysine 733 provides a ligand contact to ATP.

It belongs to the class-I aminoacyl-tRNA synthetase family.

It localises to the plastid. Its subcellular location is the chloroplast. The protein resides in the mitochondrion. The enzyme catalyses tRNA(Leu) + L-leucine + ATP = L-leucyl-tRNA(Leu) + AMP + diphosphate. Catalyzes the specific attachment of an amino acid to its cognate tRNA in a two step reaction: the amino acid (AA) is first activated by ATP to form AA-AMP and then transferred to the acceptor end of the tRNA. In Arabidopsis thaliana (Mouse-ear cress), this protein is Leucine--tRNA ligase, chloroplastic/mitochondrial.